The following is a 1363-amino-acid chain: Xanthine dehydrogenase (1363 aa).

The 87-residue stretch at 35–121 (DTIRFYLNGT…GKHVITVEGI (87 aa)) folds into the 2Fe-2S ferredoxin-type domain. C73, C78, C81, C103, C142, C145, C177, and C179 together coordinate [2Fe-2S] cluster. Positions 266–450 (FGNKRKKWYR…SSLRIPTASE (185 aa)) constitute an FAD-binding PCMH-type domain. Residues 294 to 301 (LIGGSTET), F374, 384 to 388 (SPAGN), D397, and K459 contribute to the FAD site. Mo-molybdopterin is bound by residues Q798 and F829. Substrate-binding residues include E833 and R911. A Mo-molybdopterin-binding site is contributed by R943. The substrate site is built by F945 and T1041. Residue A1110 participates in Mo-molybdopterin binding. E1295 (proton acceptor) is an active-site residue.

The protein belongs to the xanthine dehydrogenase family. It depends on FAD as a cofactor. Mo-molybdopterin serves as cofactor. Requires [2Fe-2S] cluster as cofactor.

Its subcellular location is the peroxisome. The enzyme catalyses xanthine + NAD(+) + H2O = urate + NADH + H(+). The catalysed reaction is hypoxanthine + NAD(+) + H2O = xanthine + NADH + H(+). In terms of biological role, key enzyme in purine degradation. Catalyzes the oxidation of hypoxanthine to xanthine. Catalyzes the oxidation of xanthine to uric acid. This Emericella nidulans (strain FGSC A4 / ATCC 38163 / CBS 112.46 / NRRL 194 / M139) (Aspergillus nidulans) protein is Xanthine dehydrogenase (hxA).